Here is a 289-residue protein sequence, read N- to C-terminus: Lipoyl synthase (289 aa).

[4Fe-4S] cluster-binding residues include Cys-33, Cys-38, Cys-44, Cys-59, Cys-63, Cys-66, and Ser-274. Residues 45–263 (FAGGTATFLI…SQGESELGFL (219 aa)) form the Radical SAM core domain.

The protein belongs to the radical SAM superfamily. Lipoyl synthase family. [4Fe-4S] cluster serves as cofactor.

The protein resides in the cytoplasm. The catalysed reaction is [[Fe-S] cluster scaffold protein carrying a second [4Fe-4S](2+) cluster] + N(6)-octanoyl-L-lysyl-[protein] + 2 oxidized [2Fe-2S]-[ferredoxin] + 2 S-adenosyl-L-methionine + 4 H(+) = [[Fe-S] cluster scaffold protein] + N(6)-[(R)-dihydrolipoyl]-L-lysyl-[protein] + 4 Fe(3+) + 2 hydrogen sulfide + 2 5'-deoxyadenosine + 2 L-methionine + 2 reduced [2Fe-2S]-[ferredoxin]. It participates in protein modification; protein lipoylation via endogenous pathway; protein N(6)-(lipoyl)lysine from octanoyl-[acyl-carrier-protein]: step 2/2. In terms of biological role, catalyzes the radical-mediated insertion of two sulfur atoms into the C-6 and C-8 positions of the octanoyl moiety bound to the lipoyl domains of lipoate-dependent enzymes, thereby converting the octanoylated domains into lipoylated derivatives. The sequence is that of Lipoyl synthase from Synechococcus sp. (strain RCC307).